Reading from the N-terminus, the 439-residue chain is Sex-determination protein fem-3 (439 aa).

The segment at Arg21–Glu45 is disordered.

As to quaternary structure, component of a complex containing fem-1, fem-2 and fem-3. Interacts with fem-1 and fem-2 (via N-terminus). Part of a E3 ubiquitin-protein ligase complex, at least composed of cul-2, elc-1, tra-1, fem-1, fem-2 and fem-3; mediates the ubiquitination and subsequent proteasomal degradation of tra-1. Interacts with tra-1. Interacts with sel-10. Interacts with tra-2.

Functionally, required for male development. In XO (male) animals, fem-3 directs male differentiation in all tissues. In XX (hermaphrodite) animals, it specifies the first 80 or so germ cells to be sperm. Negatively regulates male development when bound to tra-2. Together with fem-2 associates with the CBC(fem-1) E3 ubiquitin-protein ligase complex which mediates the ubiquitination and subsequent proteasomal degradation of tra-1. The chain is Sex-determination protein fem-3 from Caenorhabditis remanei (Caenorhabditis vulgaris).